The sequence spans 302 residues: Glycine--tRNA ligase alpha subunit (302 aa).

The protein belongs to the class-II aminoacyl-tRNA synthetase family. Tetramer of two alpha and two beta subunits.

Its subcellular location is the cytoplasm. It catalyses the reaction tRNA(Gly) + glycine + ATP = glycyl-tRNA(Gly) + AMP + diphosphate. The chain is Glycine--tRNA ligase alpha subunit from Xanthomonas oryzae pv. oryzae (strain MAFF 311018).